The sequence spans 148 residues: Proteasome chaperone 4 (148 aa).

The protein belongs to the PSMG4 family. In terms of assembly, component of the 20S proteasome chaperone. Forms a heterodimer with IRC25 that binds to proteasome precursors. Interacts with POP2.

The protein localises to the cytoplasm. Its function is as follows. Involved in 20S proteasome assembly, facilitating the alpha-ring formation. Involved in maintenance of telomere length. The protein is Proteasome chaperone 4 (POC4) of Saccharomyces cerevisiae (strain ATCC 204508 / S288c) (Baker's yeast).